Consider the following 106-residue polypeptide: Small ribosomal subunit protein bS16 (106 aa).

The disordered stretch occupies residues 84 to 106 (KREARNNPEKAVPRKERKAADGK).

The polypeptide is Small ribosomal subunit protein bS16 (Rhodopseudomonas palustris (strain ATCC BAA-98 / CGA009)).